The chain runs to 206 residues: Ribosomal RNA large subunit methyltransferase E (206 aa).

Gly-60, Trp-62, Asp-80, Asp-96, and Asp-121 together coordinate S-adenosyl-L-methionine. The active-site Proton acceptor is the Lys-161.

This sequence belongs to the class I-like SAM-binding methyltransferase superfamily. RNA methyltransferase RlmE family.

The protein localises to the cytoplasm. It catalyses the reaction uridine(2552) in 23S rRNA + S-adenosyl-L-methionine = 2'-O-methyluridine(2552) in 23S rRNA + S-adenosyl-L-homocysteine + H(+). Specifically methylates the uridine in position 2552 of 23S rRNA at the 2'-O position of the ribose in the fully assembled 50S ribosomal subunit. The sequence is that of Ribosomal RNA large subunit methyltransferase E from Hydrogenovibrio crunogenus (strain DSM 25203 / XCL-2) (Thiomicrospira crunogena).